Reading from the N-terminus, the 322-residue chain is Replication factor C small subunit 2 (322 aa).

ATP is bound at residue 44–51 (GPPGTGKT).

Belongs to the activator 1 small subunits family. RfcS subfamily. Heteromultimer composed of small subunits (RfcS) and large subunits (RfcL).

In terms of biological role, part of the RFC clamp loader complex which loads the PCNA sliding clamp onto DNA. The sequence is that of Replication factor C small subunit 2 from Pyrobaculum arsenaticum (strain DSM 13514 / JCM 11321 / PZ6).